Here is a 478-residue protein sequence, read N- to C-terminus: Ankyrin repeat and BTB/POZ domain-containing protein 1 (478 aa).

2 ANK repeats span residues 1 to 31 (MDTS…EVNV) and 35 to 64 (WDST…RCEA). 2 BTB domains span residues 115 to 182 (SDVV…DIGV) and 272 to 346 (PDIC…ELPP). Residues 451–477 (VQTYSAIEEAQQRLRALEDLLVSIGLD) are a coiled coil.

Its subcellular location is the cytoplasm. Functionally, may act as a mediator of the PTEN growth-suppressive signaling pathway. May play a role in developmental processes. The chain is Ankyrin repeat and BTB/POZ domain-containing protein 1 from Mus musculus (Mouse).